A 350-amino-acid polypeptide reads, in one-letter code: 2-oxoglutarate-dependent ethylene/succinate-forming enzyme (350 aa).

Positions 166–286 (GWHHMRVLRF…RFACAYFHEP (121 aa)) constitute a Fe2OG dioxygenase domain. The Fe cation site is built by His189 and His268.

Belongs to the iron/ascorbate-dependent oxidoreductase family. In terms of assembly, monomer. Fe(2+) is required as a cofactor.

The enzyme catalyses 2-oxoglutarate + O2 + 2 H(+) = ethene + 3 CO2 + H2O. It catalyses the reaction L-arginine + 2-oxoglutarate + O2 = guanidine + L-glutamate 5-semialdehyde + succinate + CO2. Its pathway is alkene biosynthesis; ethylene biosynthesis via 2-oxoglutarate. With respect to regulation, activated by catalase. Inhibited by chelating reagents such as EDTA and Tiron (4,5-dihydroxy-1,3-benzene disulphonic acid), and by DTNB (5,5'-dithio-bis-2-nitrobenzoate) and hydrogen peroxide. Functionally, simultaneously catalyzes two reactions, namely formation of ethylene and of succinate from 2-oxoglutarate, with a molar ratio of 2:1. In Pseudomonas savastanoi pv. phaseolicola (Pseudomonas syringae pv. phaseolicola), this protein is 2-oxoglutarate-dependent ethylene/succinate-forming enzyme (efe).